The chain runs to 270 residues: Putative pyruvate, phosphate dikinase regulatory protein 2 (270 aa).

An ADP-binding site is contributed by 151-158 (GVSRTSKT).

Belongs to the pyruvate, phosphate/water dikinase regulatory protein family. PDRP subfamily.

The catalysed reaction is N(tele)-phospho-L-histidyl/L-threonyl-[pyruvate, phosphate dikinase] + ADP = N(tele)-phospho-L-histidyl/O-phospho-L-threonyl-[pyruvate, phosphate dikinase] + AMP + H(+). The enzyme catalyses N(tele)-phospho-L-histidyl/O-phospho-L-threonyl-[pyruvate, phosphate dikinase] + phosphate + H(+) = N(tele)-phospho-L-histidyl/L-threonyl-[pyruvate, phosphate dikinase] + diphosphate. In terms of biological role, bifunctional serine/threonine kinase and phosphorylase involved in the regulation of the pyruvate, phosphate dikinase (PPDK) by catalyzing its phosphorylation/dephosphorylation. This is Putative pyruvate, phosphate dikinase regulatory protein 2 from Listeria welshimeri serovar 6b (strain ATCC 35897 / DSM 20650 / CCUG 15529 / CIP 8149 / NCTC 11857 / SLCC 5334 / V8).